Here is a 122-residue protein sequence, read N- to C-terminus: Ribonuclease P protein component (122 aa).

This sequence belongs to the RnpA family. In terms of assembly, consists of a catalytic RNA component (M1 or rnpB) and a protein subunit.

The enzyme catalyses Endonucleolytic cleavage of RNA, removing 5'-extranucleotides from tRNA precursor.. Functionally, RNaseP catalyzes the removal of the 5'-leader sequence from pre-tRNA to produce the mature 5'-terminus. It can also cleave other RNA substrates such as 4.5S RNA. The protein component plays an auxiliary but essential role in vivo by binding to the 5'-leader sequence and broadening the substrate specificity of the ribozyme. This Roseiflexus castenholzii (strain DSM 13941 / HLO8) protein is Ribonuclease P protein component.